The sequence spans 65 residues: Large ribosomal subunit protein bL35 (65 aa).

The tract at residues 1 to 26 is disordered; sequence MPKIKTVRGAAKRFKKTASGGFKRKQ. A compositionally biased stretch (basic residues) spans 10–26; it reads AAKRFKKTASGGFKRKQ.

The protein belongs to the bacterial ribosomal protein bL35 family.

In Actinobacillus succinogenes (strain ATCC 55618 / DSM 22257 / CCUG 43843 / 130Z), this protein is Large ribosomal subunit protein bL35.